Here is a 389-residue protein sequence, read N- to C-terminus: Phosphoglycerate kinase (389 aa).

Substrate contacts are provided by residues 19–21 (DYN), Arg34, 57–60 (HLGR), Arg117, and Arg150. ATP contacts are provided by residues Lys200, Gly288, Glu319, and 347-350 (GGDS).

It belongs to the phosphoglycerate kinase family. As to quaternary structure, monomer.

The protein localises to the cytoplasm. The catalysed reaction is (2R)-3-phosphoglycerate + ATP = (2R)-3-phospho-glyceroyl phosphate + ADP. It functions in the pathway carbohydrate degradation; glycolysis; pyruvate from D-glyceraldehyde 3-phosphate: step 2/5. In Deinococcus geothermalis (strain DSM 11300 / CIP 105573 / AG-3a), this protein is Phosphoglycerate kinase.